A 201-amino-acid polypeptide reads, in one-letter code: Small ribosomal subunit protein uS4c (201 aa).

Residues alanine 17 to phenylalanine 36 form a disordered region. Residues methionine 89–proline 157 enclose the S4 RNA-binding domain.

This sequence belongs to the universal ribosomal protein uS4 family. Part of the 30S ribosomal subunit. Contacts protein S5. The interaction surface between S4 and S5 is involved in control of translational fidelity.

The protein resides in the plastid. It is found in the chloroplast. In terms of biological role, one of the primary rRNA binding proteins, it binds directly to 16S rRNA where it nucleates assembly of the body of the 30S subunit. With S5 and S12 plays an important role in translational accuracy. This is Small ribosomal subunit protein uS4c (rps4) from Agrostis stolonifera (Creeping bentgrass).